The primary structure comprises 1045 residues: Cation efflux system protein CusA (1045 aa).

Helical transmembrane passes span 14–34 (FLVL…IINT), 336–356 (LSGK…LFLW), 361–381 (ALVA…VMHF), 388–408 (IMSL…AIVM), 444–464 (VGPA…PIFT), 483–503 (AMAG…GYWI), 530–550 (VLHW…TVLW), 869–889 (KLKL…YLAF), 896–916 (LLII…LWWM), 926–946 (TGFI…LMYL), 983–1003 (AMTV…TGAG), and 1010–1030 (IAAP…FIIP).

Belongs to the resistance-nodulation-cell division (RND) (TC 2.A.6) family. In terms of assembly, the cus efflux system is composed of CusA, CusB, CusC and CusF.

It is found in the cell inner membrane. Part of a cation efflux system that mediates resistance to copper and silver. This Escherichia coli O157:H7 protein is Cation efflux system protein CusA (cusA).